Here is a 132-residue protein sequence, read N- to C-terminus: Large ribosomal subunit protein bL17 (132 aa).

It belongs to the bacterial ribosomal protein bL17 family. As to quaternary structure, part of the 50S ribosomal subunit. Contacts protein L32.

The chain is Large ribosomal subunit protein bL17 from Saccharophagus degradans (strain 2-40 / ATCC 43961 / DSM 17024).